Here is a 114-residue protein sequence, read N- to C-terminus: uncharacterized protein (114 aa).

This is an uncharacterized protein from Escherichia coli O6:H1 (strain CFT073 / ATCC 700928 / UPEC).